We begin with the raw amino-acid sequence, 478 residues long: Capsid vertex component 1 (478 aa).

Positions 131–184 (PRGPESEGEGGKDGGAGRGDGEASRESPLERIAAEASGPGPGSGRGRSAGGRRA) are disordered. A compositionally biased stretch (basic and acidic residues) spans 149–163 (GDGEASRESPLERIA). Gly residues predominate over residues 169-179 (PGPGSGRGRSA).

The protein belongs to the herpesviridae CVC1 protein family. As to quaternary structure, interacts (via C-terminus) with capsid vertex component 2/CVC2.

The protein resides in the virion. Its subcellular location is the host nucleus. Functionally, capsid vertex-specific component that plays a role during viral DNA encapsidation, assuring correct genome cleavage and presumably stabilizing capsids that contain full-length viral genomes. This chain is Capsid vertex component 1, found in Equus caballus (Horse).